A 505-amino-acid chain; its full sequence is Protein disulfide-isomerase A3 (505 aa).

The first 24 residues, 1-24 (MRLRRLALFPGVALLLAAARLAAA), serve as a signal peptide directing secretion. The Thioredoxin 1 domain maps to 25–133 (SDVLELTDDN…IVSHLKKQAG (109 aa)). Catalysis depends on nucleophile residues cysteine 57 and cysteine 60. An intrachain disulfide couples cysteine 57 to cysteine 60. At lysine 61 the chain carries N6-methyllysine. Cysteine 85 and cysteine 92 form a disulfide bridge. The residue at position 129 (lysine 129) is an N6-succinyllysine. Lysine 152 is modified (N6-acetyllysine). Lysine 218 is subject to N6-succinyllysine. Residue lysine 252 is modified to N6-acetyllysine. Threonine 319 is subject to Phosphothreonine. Residues 343–485 (SRDGKALERF…FISYLQREAT (143 aa)) enclose the Thioredoxin 2 domain. The residue at position 362 (lysine 362) is an N6-acetyllysine. Active-site nucleophile residues include cysteine 406 and cysteine 409. Cysteine 406 and cysteine 409 are oxidised to a cystine. The segment at 484 to 505 (ATNPPVIQEEKPKKKKKAQEDL) is disordered. Positions 491 to 505 (QEEKPKKKKKAQEDL) are enriched in basic and acidic residues. Lysine 494 is subject to N6-acetyllysine. The Prevents secretion from ER motif lies at 502-505 (QEDL).

It belongs to the protein disulfide isomerase family. As to quaternary structure, part of the major histocompatibility complex class I (MHC I) peptide loading complex composed of TAP1, TAP2, B2M, MHC heavy chain, TAPBP, PDIA3, and CALR. Interacts with ERP27 and CANX. Interacts with SERPINA2 and with SERPINA1. Interacts with ATP2A2. In terms of processing, within the major histocompatibility complex class I (MHC I) peptide loading complex forms reversible disulfide-linked heterodimers with TAPBP as part of its protein folding chaperone activity. This is essential to assist the dynamic assembly of the MHC I complex with high affinity antigens in the endoplasmic reticulum. Phosphorylated.

The protein resides in the endoplasmic reticulum. The protein localises to the endoplasmic reticulum lumen. It is found in the melanosome. It catalyses the reaction Catalyzes the rearrangement of -S-S- bonds in proteins.. Functionally, protein disulfide isomerase that catalyzes the formation, isomerization, and reduction or oxidation of disulfide bonds in client proteins and functions as a protein folding chaperone. Core component of the major histocompatibility complex class I (MHC I) peptide loading complex where it functions as an essential folding chaperone for TAPBP. Through TAPBP, assists the dynamic assembly of the MHC I complex with high affinity antigens in the endoplasmic reticulum. Therefore, plays a crucial role in the presentation of antigens to cytotoxic T cells in adaptive immunity. The chain is Protein disulfide-isomerase A3 (PDIA3) from Chlorocebus aethiops (Green monkey).